The following is a 274-amino-acid chain: Photosystem II extrinsic protein O (274 aa).

The N-terminal stretch at 1–28 (MRFRPSIVALLSVCFGLLTFLYSGSAFA) is a signal peptide.

This sequence belongs to the PsbO family. PSII is composed of 1 copy each of membrane proteins PsbA, PsbB, PsbC, PsbD, PsbE, PsbF, PsbH, PsbI, PsbJ, PsbK, PsbL, PsbM, PsbT, PsbX, PsbY, PsbZ, Psb30/Ycf12, peripheral proteins PsbO, CyanoQ (PsbQ), PsbU, PsbV and a large number of cofactors. It forms dimeric complexes. Contacts PsbQ.

It localises to the cellular thylakoid membrane. In terms of biological role, one of the extrinsic, lumenal subunits of photosystem II (PSII), which stabilize and protect the oxygen-evolving complex. PSII is a light-driven water plastoquinone oxidoreductase, using light energy to abstract electrons from H(2)O, generating a proton gradient subsequently used for ATP formation. Required for dimerization of PSII and for binding of PsbQ to PSII. This is Photosystem II extrinsic protein O from Synechocystis sp. (strain ATCC 27184 / PCC 6803 / Kazusa).